A 144-amino-acid polypeptide reads, in one-letter code: MGISVKDVDSHTFTKALAAFLKKSGKMKIPEWATIIKLSKFNELSPYDEDWFYTRAASICRHLYIRSPAGVGALTKIYGDRKRNGTVPSHYCRSSGSVARRVLQALETQKLVEKDANGGRKLTSQGQKDLDRIAAQVKEKTKSK.

Belongs to the eukaryotic ribosomal protein eS19 family.

The polypeptide is Small ribosomal subunit protein eS19 (RPS19) (Argopecten irradians (Bay scallop)).